The sequence spans 843 residues: Protein translocase subunit SecA (843 aa).

ATP-binding positions include Q85, 103 to 107 (GEGKT), and D490. A disordered region spans residues 799 to 834 (KNAVENRSDDSLPKQPVKAEPRVGRNDPCPCGSGKK). The segment covering 802–823 (VENRSDDSLPKQPVKAEPRVGR) has biased composition (basic and acidic residues). Zn(2+) is bound by residues C827, C829, C838, and C839.

The protein belongs to the SecA family. Monomer and homodimer. Part of the essential Sec protein translocation apparatus which comprises SecA, SecYEG and auxiliary proteins SecDF. Other proteins may also be involved. It depends on Zn(2+) as a cofactor.

The protein resides in the cell membrane. It localises to the cytoplasm. It catalyses the reaction ATP + H2O + cellular proteinSide 1 = ADP + phosphate + cellular proteinSide 2.. Functionally, part of the Sec protein translocase complex. Interacts with the SecYEG preprotein conducting channel. Has a central role in coupling the hydrolysis of ATP to the transfer of proteins into and across the cell membrane, serving as an ATP-driven molecular motor driving the stepwise translocation of polypeptide chains across the membrane. This chain is Protein translocase subunit SecA, found in Heliobacterium modesticaldum (strain ATCC 51547 / Ice1).